Here is a 456-residue protein sequence, read N- to C-terminus: Peptide chain release factor PrfB1, chloroplastic (456 aa).

The transit peptide at 1 to 58 directs the protein to the chloroplast; it reads MSMELTVLGPLAGRSFAIAGKPKLLLLRPTNLPLLRLSLPLSLPNFSSSSRFNSPIVF.

The protein belongs to the prokaryotic/mitochondrial release factor family. Expressed in leaves, stems and flowers.

The protein localises to the plastid. The protein resides in the chloroplast stroma. Directs the termination of translation in response to the peptide chain termination codon UGA. Required for the proper translation, stability and normal processing of UGA-containing polycistronic transcripts in chloroplasts. In Arabidopsis thaliana (Mouse-ear cress), this protein is Peptide chain release factor PrfB1, chloroplastic.